A 211-amino-acid chain; its full sequence is Thiamine-phosphate synthase (211 aa).

Residues 37 to 41 (QLRIK) and N69 each bind 4-amino-2-methyl-5-(diphosphooxymethyl)pyrimidine. The Mg(2+) site is built by D70 and D89. S108 provides a ligand contact to 4-amino-2-methyl-5-(diphosphooxymethyl)pyrimidine. Residue 134 to 136 (TQT) participates in 2-[(2R,5Z)-2-carboxy-4-methylthiazol-5(2H)-ylidene]ethyl phosphate binding. K137 provides a ligand contact to 4-amino-2-methyl-5-(diphosphooxymethyl)pyrimidine. Residues G166 and 186-187 (VS) contribute to the 2-[(2R,5Z)-2-carboxy-4-methylthiazol-5(2H)-ylidene]ethyl phosphate site.

It belongs to the thiamine-phosphate synthase family. It depends on Mg(2+) as a cofactor.

The enzyme catalyses 2-[(2R,5Z)-2-carboxy-4-methylthiazol-5(2H)-ylidene]ethyl phosphate + 4-amino-2-methyl-5-(diphosphooxymethyl)pyrimidine + 2 H(+) = thiamine phosphate + CO2 + diphosphate. It carries out the reaction 2-(2-carboxy-4-methylthiazol-5-yl)ethyl phosphate + 4-amino-2-methyl-5-(diphosphooxymethyl)pyrimidine + 2 H(+) = thiamine phosphate + CO2 + diphosphate. The catalysed reaction is 4-methyl-5-(2-phosphooxyethyl)-thiazole + 4-amino-2-methyl-5-(diphosphooxymethyl)pyrimidine + H(+) = thiamine phosphate + diphosphate. It functions in the pathway cofactor biosynthesis; thiamine diphosphate biosynthesis; thiamine phosphate from 4-amino-2-methyl-5-diphosphomethylpyrimidine and 4-methyl-5-(2-phosphoethyl)-thiazole: step 1/1. Condenses 4-methyl-5-(beta-hydroxyethyl)thiazole monophosphate (THZ-P) and 2-methyl-4-amino-5-hydroxymethyl pyrimidine pyrophosphate (HMP-PP) to form thiamine monophosphate (TMP). This Escherichia coli (strain SE11) protein is Thiamine-phosphate synthase.